A 546-amino-acid polypeptide reads, in one-letter code: Membrane protein insertase YidC (546 aa).

The helical transmembrane segment at 8 to 28 threads the bilayer; it reads ILLATVLSVGILILWQVIFPT. The tract at residues 31 to 70 is disordered; that stretch reads VPPKPAPPPAAEVAKPAAPASPAPGAAAPAVPAPPPDAPE. Low complexity predominate over residues 41–60; sequence AEVAKPAAPASPAPGAAAPA. The next 5 helical transmembrane spans lie at 326–346, 356–376, 422–442, 459–479, and 498–518; these read IDYG…LYVM, WGVA…PLTY, LGGC…YAAL, LTAH…SFVM, and FFPG…TLYI.

Belongs to the OXA1/ALB3/YidC family. Type 1 subfamily. As to quaternary structure, interacts with the Sec translocase complex via SecD. Specifically interacts with transmembrane segments of nascent integral membrane proteins during membrane integration.

Its subcellular location is the cell inner membrane. Required for the insertion and/or proper folding and/or complex formation of integral membrane proteins into the membrane. Involved in integration of membrane proteins that insert both dependently and independently of the Sec translocase complex, as well as at least some lipoproteins. Aids folding of multispanning membrane proteins. The chain is Membrane protein insertase YidC from Anaeromyxobacter sp. (strain K).